A 456-amino-acid chain; its full sequence is Carnosine N-methyltransferase unmet (456 aa).

S-adenosyl-L-methionine contacts are provided by Arg-154, Gly-195, Glu-216, Asp-282, Phe-283, and Cys-299. Carnosine-binding residues include Asp-303, His-334, and Tyr-385. Over residues 402–418 the composition is skewed to basic and acidic residues; that stretch reads RGKRKASREPHDLIVRE. The disordered stretch occupies residues 402-456; sequence RGKRKASREPHDLIVREDSEEEGEQQPERNETEEKQQLKPLATANCETEIKEQPS. Phosphoserine occurs at positions 408 and 420. Residues 427-438 are compositionally biased toward basic and acidic residues; sequence QPERNETEEKQQ.

The protein belongs to the carnosine N-methyltransferase family. In terms of assembly, associates with the GATOR2 complex; the interaction is probably direct and is inhibited by S-adenosyl-L-methionine binding. Associates with the GATOR1 complex; the interaction is probably indirect and mediated by the GATOR2 complex.

It carries out the reaction carnosine + S-adenosyl-L-methionine = anserine + S-adenosyl-L-homocysteine + H(+). Its function is as follows. S-adenosyl-L-methionine-binding protein that acts as a sensor to signal methionine availability to the mTORC1 signaling pathway. Associates with the GATOR2 complex in the absence of methionine to inhibit mTORC1 signaling, but dissociates in the presence of the methionine derivative S-adenosyl-L-methionine; S-adenosyl-L-homocysteine binding does not induce dissociation. Required for mTORC1 pathway response to methionine starvation. Exerts a protective function on developing egg chambers by inhibiting mTORC1 signaling under starvation conditions. May also function as a N-methyltransferase that mediates the formation of anserine (beta-alanyl-N(Pi)-methyl-L-histidine) from carnosine. It is unclear whether this protein has retained N-methyltransferase activity or if it is an evolutionary intermediate whose substrate binding ability has been co-opted to function as a nutrient sensor for mTORC1 signaling. This is Carnosine N-methyltransferase unmet from Drosophila melanogaster (Fruit fly).